The primary structure comprises 946 residues: Bifunctional glutamine synthetase adenylyltransferase/adenylyl-removing enzyme (946 aa).

Residues 1–440 (MKPLSSPLQQ…VFNELIGDDE (440 aa)) form an adenylyl removase region. The tract at residues 449–946 (SEQWRELWQD…ASWQKWLVEE (498 aa)) is adenylyl transferase.

This sequence belongs to the GlnE family. Mg(2+) is required as a cofactor.

It carries out the reaction [glutamine synthetase]-O(4)-(5'-adenylyl)-L-tyrosine + phosphate = [glutamine synthetase]-L-tyrosine + ADP. It catalyses the reaction [glutamine synthetase]-L-tyrosine + ATP = [glutamine synthetase]-O(4)-(5'-adenylyl)-L-tyrosine + diphosphate. Its function is as follows. Involved in the regulation of glutamine synthetase GlnA, a key enzyme in the process to assimilate ammonia. When cellular nitrogen levels are high, the C-terminal adenylyl transferase (AT) inactivates GlnA by covalent transfer of an adenylyl group from ATP to specific tyrosine residue of GlnA, thus reducing its activity. Conversely, when nitrogen levels are low, the N-terminal adenylyl removase (AR) activates GlnA by removing the adenylyl group by phosphorolysis, increasing its activity. The regulatory region of GlnE binds the signal transduction protein PII (GlnB) which indicates the nitrogen status of the cell. The sequence is that of Bifunctional glutamine synthetase adenylyltransferase/adenylyl-removing enzyme from Shigella boydii serotype 4 (strain Sb227).